Reading from the N-terminus, the 760-residue chain is Xaa-Pro dipeptidyl-peptidase (760 aa).

Residues Ser349, Asp469, and His499 each act as charge relay system in the active site.

Belongs to the peptidase S15 family. As to quaternary structure, homodimer.

The protein resides in the cytoplasm. The catalysed reaction is Hydrolyzes Xaa-Pro-|- bonds to release unblocked, N-terminal dipeptides from substrates including Ala-Pro-|-p-nitroanilide and (sequentially) Tyr-Pro-|-Phe-Pro-|-Gly-Pro-|-Ile.. In terms of biological role, removes N-terminal dipeptides sequentially from polypeptides having unsubstituted N-termini provided that the penultimate residue is proline. The chain is Xaa-Pro dipeptidyl-peptidase from Streptococcus pyogenes serotype M18 (strain MGAS8232).